The following is a 177-amino-acid chain: ATP synthase subunit delta (177 aa).

Belongs to the ATPase delta chain family. As to quaternary structure, F-type ATPases have 2 components, F(1) - the catalytic core - and F(0) - the membrane proton channel. F(1) has five subunits: alpha(3), beta(3), gamma(1), delta(1), epsilon(1). F(0) has three main subunits: a(1), b(2) and c(10-14). The alpha and beta chains form an alternating ring which encloses part of the gamma chain. F(1) is attached to F(0) by a central stalk formed by the gamma and epsilon chains, while a peripheral stalk is formed by the delta and b chains.

It is found in the cell inner membrane. F(1)F(0) ATP synthase produces ATP from ADP in the presence of a proton or sodium gradient. F-type ATPases consist of two structural domains, F(1) containing the extramembraneous catalytic core and F(0) containing the membrane proton channel, linked together by a central stalk and a peripheral stalk. During catalysis, ATP synthesis in the catalytic domain of F(1) is coupled via a rotary mechanism of the central stalk subunits to proton translocation. Its function is as follows. This protein is part of the stalk that links CF(0) to CF(1). It either transmits conformational changes from CF(0) to CF(1) or is implicated in proton conduction. In Flavobacterium johnsoniae (strain ATCC 17061 / DSM 2064 / JCM 8514 / BCRC 14874 / CCUG 350202 / NBRC 14942 / NCIMB 11054 / UW101) (Cytophaga johnsonae), this protein is ATP synthase subunit delta.